Here is a 386-residue protein sequence, read N- to C-terminus: O-methyltransferase 11 (386 aa).

S-adenosyl-L-homocysteine contacts are provided by S207, G231, D254, D274, and K288. D254 is a binding site for S-adenosyl-L-methionine. The Proton acceptor role is filled by H292.

This sequence belongs to the class I-like SAM-binding methyltransferase superfamily. Cation-independent O-methyltransferase family. As to quaternary structure, homodimer.

The catalysed reaction is dopamine + S-adenosyl-L-methionine = 4-methoxytyramine + S-adenosyl-L-homocysteine + H(+). It catalyses the reaction 3,4-dihydroxy-5-methoxyphenethylamine + S-adenosyl-L-methionine = 3-hydroxy-4,5-dimethoxyphenethylamine + S-adenosyl-L-homocysteine + H(+). The enzyme catalyses 3-hydroxy-4,5-dimethoxyphenethylamine + S-adenosyl-L-methionine = mescaline + S-adenosyl-L-homocysteine + H(+). It carries out the reaction 4-hydroxy-3,5-dimethoxyphenethylamine + S-adenosyl-L-methionine = mescaline + S-adenosyl-L-homocysteine + H(+). The protein operates within aromatic compound metabolism. It functions in the pathway alkaloid biosynthesis. O-methyltransferase participating in the biosynthesis of natural products derived from phenylethylamine, including mescaline, a natural hallucinogen potentially used in psychotherapeutic treatments. Catalyzes the O-methylation of mescaline para hydroxyl groups, using dopamine, 3,4-dihydroxy-5-methoxyphenethylamine, 3-hydroxy-4,5-dimethoxyphenethylamine and 4-hydroxy-3,5-dimethoxyphenethylamine as substrates. The sequence is that of O-methyltransferase 11 from Lophophora williamsii (Peyote).